Reading from the N-terminus, the 295-residue chain is 4-diphosphocytidyl-2-C-methyl-D-erythritol kinase (295 aa).

Residue Lys-10 is part of the active site. 97–107 (PIGSGLGGASS) is a binding site for ATP. The active site involves Asp-139.

This sequence belongs to the GHMP kinase family. IspE subfamily. Homodimer.

It catalyses the reaction 4-CDP-2-C-methyl-D-erythritol + ATP = 4-CDP-2-C-methyl-D-erythritol 2-phosphate + ADP + H(+). Its pathway is isoprenoid biosynthesis; isopentenyl diphosphate biosynthesis via DXP pathway; isopentenyl diphosphate from 1-deoxy-D-xylulose 5-phosphate: step 3/6. Catalyzes the phosphorylation of the position 2 hydroxy group of 4-diphosphocytidyl-2C-methyl-D-erythritol. The chain is 4-diphosphocytidyl-2-C-methyl-D-erythritol kinase from Blochmanniella pennsylvanica (strain BPEN).